The chain runs to 70 residues: Brevinin-1PLb (70 aa).

An N-terminal signal peptide occupies residues 1–22; that stretch reads MFTTKKSMLLLFFLGTINLSLC. Residues 23–44 constitute a propeptide that is removed on maturation; it reads EEERNAEEERRDEPDEMNVEVE. Cysteines 64 and 70 form a disulfide.

In terms of tissue distribution, expressed by the skin glands.

The protein resides in the secreted. Antimicrobial activity against the Gram-negative bacterium E.coli, the Gram-positive bacterium S.aureus and the yeast C.albicans. This chain is Brevinin-1PLb, found in Lithobates palustris (Pickerel frog).